The chain runs to 703 residues: MLNLFAAFKKDRIWDFDGGIHPPEMKTQSSGVPLRTAPLPDKFIIPLQQHLGPEGELCVKVGDTVLKGQPLTVGRGRTVPVHAPTSGTISAITPHITAHPSGLAELCVIIQPDGEDRWCERAPVADYRQLTASELIQRIHQAGIAGLGGAGFPTASKLQGGMNGVETLILNAAECEPYITADDRLMQEHADQVIEGTQILRHLLQPKVTLIGIEDNKPEAIAALKLALRGQPGIALRVIPTKYPSGGAKQLTKILIGKEVPHGKHSSAIGVLMQNVGTAFAIKRAIVDGEPLIERVVTLTGEALSLPGNLWARIGTPVQHLLKFAGFQPQAQQMVVMGGPLMGFTLPALHVPIVKISNCILAPSVSEMAPQEQEQSCIRCGLCVDACPAGLLPQQLYWFSRGEEHEKARNHNLFDCIECGACAFVCPSNIPLVQYYRQEKAEIKAIDLEAARTAEAKARYEAKLARLEREKLAREERHKKAAVKLTDGDQDAVQAALARVRSKNAVPATGTISGDAPDNSEMNAAREARKAQARERRAQQETPVAPVTASASEDEDPRKAAVAAALARVKAKKAAPQATAVETPAESPAVVTEEDPRKAAVAAALARVKAKKAAQQATAVETPAESPAVVTEEDPRKAAVAAALARVKAKKAAQQATAVETPAESPAVVTEEDPRKAAVAAAIARAKAKRAAQSLTTADTDKE.

4Fe-4S ferredoxin-type domains lie at 368–397 (MAPQEQEQSCIRCGLCVDACPAGLLPQQLY) and 407–436 (KARNHNLFDCIECGACAFVCPSNIPLVQYY). [4Fe-4S] cluster contacts are provided by cysteine 377, cysteine 380, cysteine 383, cysteine 387, cysteine 416, cysteine 419, cysteine 422, and cysteine 426. Disordered stretches follow at residues 505–558 (AVPA…EDPR) and 653–674 (AQQATAVETPAESPAVVTEEDP). Residues 524–539 (AAREARKAQARERRAQ) are compositionally biased toward basic and acidic residues.

Belongs to the 4Fe4S bacterial-type ferredoxin family. RnfC subfamily. As to quaternary structure, the complex is composed of six subunits: RnfA, RnfB, RnfC, RnfD, RnfE and RnfG. It depends on [4Fe-4S] cluster as a cofactor.

The protein localises to the cell inner membrane. Part of a membrane-bound complex that couples electron transfer with translocation of ions across the membrane. The sequence is that of Ion-translocating oxidoreductase complex subunit C from Serratia proteamaculans (strain 568).